Here is a 278-residue protein sequence, read N- to C-terminus: 4-deoxy-L-threo-5-hexosulose-uronate ketol-isomerase (278 aa).

Zn(2+) contacts are provided by His-196, His-198, Glu-203, and His-245.

The protein belongs to the KduI family. It depends on Zn(2+) as a cofactor.

The catalysed reaction is 5-dehydro-4-deoxy-D-glucuronate = 3-deoxy-D-glycero-2,5-hexodiulosonate. Its pathway is glycan metabolism; pectin degradation; 2-dehydro-3-deoxy-D-gluconate from pectin: step 4/5. Its function is as follows. Catalyzes the isomerization of 5-dehydro-4-deoxy-D-glucuronate to 3-deoxy-D-glycero-2,5-hexodiulosonate. This is 4-deoxy-L-threo-5-hexosulose-uronate ketol-isomerase from Salmonella heidelberg (strain SL476).